A 559-amino-acid chain; its full sequence is 2-isopropylmalate synthase (559 aa).

Positions 33–307 (PIWCSSDLRD…NPELDFSDID (275 aa)) constitute a Pyruvate carboxyltransferase domain. D42, H246, H248, and N282 together coordinate Mg(2+). The regulatory domain stretch occupies residues 439–559 (ANTPYALVSH…SLSEQQAKAA (121 aa)).

This sequence belongs to the alpha-IPM synthase/homocitrate synthase family. LeuA type 2 subfamily. In terms of assembly, homodimer. Mg(2+) is required as a cofactor.

The protein localises to the cytoplasm. It carries out the reaction 3-methyl-2-oxobutanoate + acetyl-CoA + H2O = (2S)-2-isopropylmalate + CoA + H(+). It participates in amino-acid biosynthesis; L-leucine biosynthesis; L-leucine from 3-methyl-2-oxobutanoate: step 1/4. Functionally, catalyzes the condensation of the acetyl group of acetyl-CoA with 3-methyl-2-oxobutanoate (2-ketoisovalerate) to form 3-carboxy-3-hydroxy-4-methylpentanoate (2-isopropylmalate). This Pseudomonas fluorescens (strain ATCC BAA-477 / NRRL B-23932 / Pf-5) protein is 2-isopropylmalate synthase.